Consider the following 412-residue polypeptide: Heme chaperone HemW (412 aa).

The Radical SAM core domain occupies 4–241 (GTYLMPTAAY…RHGQEVLTQA (238 aa)). Tyrosine 13 contributes to the S-adenosyl-L-methionine binding site. Cysteine 19, cysteine 23, and cysteine 26 together coordinate [2Fe-2S] cluster. Residues glycine 72, 73-74 (GT), glutamate 105, glutamine 132, arginine 144, and aspartate 169 each bind S-adenosyl-L-methionine.

This sequence belongs to the anaerobic coproporphyrinogen-III oxidase family. HemW subfamily. [4Fe-4S] cluster is required as a cofactor.

Its subcellular location is the cytoplasm. Its function is as follows. Probably acts as a heme chaperone, transferring heme to an unknown acceptor. Binds one molecule of heme per monomer, possibly covalently. Binds 1 [2Fe-2S] cluster. Although this protein has sequence motifs typically found in proteins binding the [4Fe-4S]-AdoMet radical-SAM cluster and S-adenosylmethionine, spectroscopic evidence suggests that a [2Fe-2S] cluster is present; S-adenosylmethionine was not detected. Has no detectable coproporphyrinogen-III oxidase activity. In Synechocystis sp. (strain ATCC 27184 / PCC 6803 / Kazusa), this protein is Heme chaperone HemW.